A 193-amino-acid polypeptide reads, in one-letter code: Acyl carrier protein phosphodiesterase (193 aa).

The protein belongs to the AcpH family.

It carries out the reaction holo-[ACP] + H2O = apo-[ACP] + (R)-4'-phosphopantetheine + H(+). Its function is as follows. Converts holo-ACP to apo-ACP by hydrolytic cleavage of the phosphopantetheine prosthetic group from ACP. This is Acyl carrier protein phosphodiesterase from Escherichia coli O157:H7.